The chain runs to 315 residues: 4-hydroxy-3-methylbut-2-enyl diphosphate reductase (315 aa).

C12 is a [4Fe-4S] cluster binding site. Residues H41 and H74 each coordinate (2E)-4-hydroxy-3-methylbut-2-enyl diphosphate. Dimethylallyl diphosphate-binding residues include H41 and H74. Isopentenyl diphosphate-binding residues include H41 and H74. C96 serves as a coordination point for [4Fe-4S] cluster. Residue H124 participates in (2E)-4-hydroxy-3-methylbut-2-enyl diphosphate binding. H124 is a binding site for dimethylallyl diphosphate. H124 contacts isopentenyl diphosphate. E126 serves as the catalytic Proton donor. T168 contributes to the (2E)-4-hydroxy-3-methylbut-2-enyl diphosphate binding site. A [4Fe-4S] cluster-binding site is contributed by C198. S226, S227, N228, and S270 together coordinate (2E)-4-hydroxy-3-methylbut-2-enyl diphosphate. Dimethylallyl diphosphate-binding residues include S226, S227, N228, and S270. Isopentenyl diphosphate is bound by residues S226, S227, N228, and S270.

The protein belongs to the IspH family. Requires [4Fe-4S] cluster as cofactor.

The catalysed reaction is isopentenyl diphosphate + 2 oxidized [2Fe-2S]-[ferredoxin] + H2O = (2E)-4-hydroxy-3-methylbut-2-enyl diphosphate + 2 reduced [2Fe-2S]-[ferredoxin] + 2 H(+). It carries out the reaction dimethylallyl diphosphate + 2 oxidized [2Fe-2S]-[ferredoxin] + H2O = (2E)-4-hydroxy-3-methylbut-2-enyl diphosphate + 2 reduced [2Fe-2S]-[ferredoxin] + 2 H(+). The protein operates within isoprenoid biosynthesis; dimethylallyl diphosphate biosynthesis; dimethylallyl diphosphate from (2E)-4-hydroxy-3-methylbutenyl diphosphate: step 1/1. It participates in isoprenoid biosynthesis; isopentenyl diphosphate biosynthesis via DXP pathway; isopentenyl diphosphate from 1-deoxy-D-xylulose 5-phosphate: step 6/6. In terms of biological role, catalyzes the conversion of 1-hydroxy-2-methyl-2-(E)-butenyl 4-diphosphate (HMBPP) into a mixture of isopentenyl diphosphate (IPP) and dimethylallyl diphosphate (DMAPP). Acts in the terminal step of the DOXP/MEP pathway for isoprenoid precursor biosynthesis. This Pseudomonas putida (strain ATCC 700007 / DSM 6899 / JCM 31910 / BCRC 17059 / LMG 24140 / F1) protein is 4-hydroxy-3-methylbut-2-enyl diphosphate reductase.